The sequence spans 712 residues: Polyribonucleotide nucleotidyltransferase (712 aa).

2 residues coordinate Mg(2+): Asp484 and Asp490. Positions 551-610 (PKVFTIQIHPDKIRDIIGPGGKVIRAIQAETGTRVDVDDSGLVKVSAVNLEEGEAALQMI) constitute a KH domain. Residues 620–688 (GAVYEGTVVK…KDGKIRLSRK (69 aa)) enclose the S1 motif domain. The tract at residues 689 to 712 (ALLEEENGKSGPENGAPQRDKNRH) is disordered.

This sequence belongs to the polyribonucleotide nucleotidyltransferase family. Mg(2+) serves as cofactor.

It is found in the cytoplasm. The enzyme catalyses RNA(n+1) + phosphate = RNA(n) + a ribonucleoside 5'-diphosphate. Its function is as follows. Involved in mRNA degradation. Catalyzes the phosphorolysis of single-stranded polyribonucleotides processively in the 3'- to 5'-direction. This is Polyribonucleotide nucleotidyltransferase from Desulfatibacillum aliphaticivorans.